Consider the following 159-residue polypeptide: Ribosome maturation factor RimP (159 aa).

Belongs to the RimP family.

Its subcellular location is the cytoplasm. In terms of biological role, required for maturation of 30S ribosomal subunits. The protein is Ribosome maturation factor RimP of Streptococcus pneumoniae (strain 70585).